A 731-amino-acid polypeptide reads, in one-letter code: 1,4-alpha-glucan branching enzyme GlgB (731 aa).

D411 (nucleophile) is an active-site residue. Residue E464 is the Proton donor of the active site.

It belongs to the glycosyl hydrolase 13 family. GlgB subfamily. As to quaternary structure, monomer.

It catalyses the reaction Transfers a segment of a (1-&gt;4)-alpha-D-glucan chain to a primary hydroxy group in a similar glucan chain.. It functions in the pathway glycan biosynthesis; glycogen biosynthesis. Functionally, catalyzes the formation of the alpha-1,6-glucosidic linkages in glycogen by scission of a 1,4-alpha-linked oligosaccharide from growing alpha-1,4-glucan chains and the subsequent attachment of the oligosaccharide to the alpha-1,6 position. This is 1,4-alpha-glucan branching enzyme GlgB from Mycobacterium ulcerans (strain Agy99).